We begin with the raw amino-acid sequence, 305 residues long: Ribonucleoside-diphosphate reductase small subunit (305 aa).

The Fe cation site is built by Glu-64, Glu-94, and His-97. Residue Tyr-101 is part of the active site. A helical transmembrane segment spans residues Val-150–Leu-170. Glu-157, Glu-191, and His-194 together coordinate Fe cation.

The protein belongs to the ribonucleoside diphosphate reductase small chain family. As to quaternary structure, heterotetramer composed of a homodimer of the large subunit (R1) and a homodimer of the small subunit (R2). Larger multisubunit protein complex are also active, composed of (R1)n(R2)n. Fe cation serves as cofactor.

The protein resides in the host membrane. It carries out the reaction a 2'-deoxyribonucleoside 5'-diphosphate + [thioredoxin]-disulfide + H2O = a ribonucleoside 5'-diphosphate + [thioredoxin]-dithiol. Its function is as follows. Ribonucleoside-diphosphate reductase holoenzyme provides the precursors necessary for viral DNA synthesis. Allows virus growth in non-dividing cells, as well as reactivation from latency in infected hosts. Catalyzes the biosynthesis of deoxyribonucleotides from the corresponding ribonucleotides. The protein is Ribonucleoside-diphosphate reductase small subunit of Alcelaphine herpesvirus 1 (strain C500) (AlHV-1).